Consider the following 803-residue polypeptide: Zinc finger protein 226 (803 aa).

Positions V8–L78 constitute a KRAB domain. The segment at Y252–Q274 adopts a C2H2-type 1; degenerate zinc-finger fold. A C2H2-type 2; degenerate zinc finger spans residues L280–H302. 17 consecutive C2H2-type zinc fingers follow at residues L307–H329, Y335–H357, Y363–H385, F391–H413, Y419–H441, Y447–H469, Y475–H497, Y503–H525, Y531–H553, F559–H581, Y587–H609, Y615–H637, F643–H665, Y671–H693, Y699–H721, Y727–H749, and Y755–H777. The interval K781–K803 is disordered. The span at N791–K803 shows a compositional bias: basic and acidic residues.

This sequence belongs to the krueppel C2H2-type zinc-finger protein family.

Its subcellular location is the nucleus. May be involved in transcriptional regulation. The sequence is that of Zinc finger protein 226 (ZNF226) from Homo sapiens (Human).